The chain runs to 215 residues: MIQPVSLEFVPGPSGLEVKYAAVMDYLSIWQAMKAFTASRTQNTPDEIWLLQHWPVYTQGVAGKPEHLLCNPGIPVVRTDRGGQITYHGPGQIIAYLLLDMRRLKLGVRDLVRKMEGAVVDLLDEYRVNACGDEDAPGVYVGGAKIAALGLKIKNGCCYHGLALNVSMDLAPFMAINPCGYTGLRVTQTSDLGITDELETLQGKLAEKLKARLKQ.

Residues 42–215 form the BPL/LPL catalytic domain; that stretch reads QNTPDEIWLL…AEKLKARLKQ (174 aa). Residues 81-88, 148-150, and 161-163 contribute to the substrate site; these read RGGQITYH, ALG, and GLA. Residue C179 is the Acyl-thioester intermediate of the active site.

The protein belongs to the LipB family.

The protein resides in the cytoplasm. It carries out the reaction octanoyl-[ACP] + L-lysyl-[protein] = N(6)-octanoyl-L-lysyl-[protein] + holo-[ACP] + H(+). It participates in protein modification; protein lipoylation via endogenous pathway; protein N(6)-(lipoyl)lysine from octanoyl-[acyl-carrier-protein]: step 1/2. Functionally, catalyzes the transfer of endogenously produced octanoic acid from octanoyl-acyl-carrier-protein onto the lipoyl domains of lipoate-dependent enzymes. Lipoyl-ACP can also act as a substrate although octanoyl-ACP is likely to be the physiological substrate. This is Octanoyltransferase from Nitrosospira multiformis (strain ATCC 25196 / NCIMB 11849 / C 71).